Here is a 798-residue protein sequence, read N- to C-terminus: Cadherin-20 (798 aa).

An N-terminal signal peptide occupies residues 1–35; it reads MWTSGRMSNAKNLFGLGVSLYFWGLMDLTTTVLSG. A propeptide spanning residues 36–58 is cleaved from the precursor; it reads SARPLTEGPEDNLSDKLHQRMKR. Asn-47 carries an N-linked (GlcNAc...) asparagine glycan. At 59–618 the chain is on the extracellular side; that stretch reads SWVWNQFFVL…AYVLPVSLSR (560 aa). Cadherin domains lie at 60 to 164, 165 to 273, 274 to 392, 389 to 493, and 493 to 615; these read WVWN…EPKF, LDGP…PPRF, PQKH…EPSF, EPSF…APEF, and FARF…LPVS. Positions 88–90 match the Cell attachment site motif; sequence RGD. Asn-260 carries an N-linked (GlcNAc...) asparagine glycan. Asn-419, Asn-460, and Asn-541 each carry an N-linked (GlcNAc...) asparagine glycan. Residues 619-639 form a helical membrane-spanning segment; sequence GALIAILACIFVLLVLVLLIL. The Cytoplasmic segment spans residues 640–798; the sequence is SMRRQRKQPY…GATDSSGALW (159 aa).

As to expression, detected in embryonic spinal cord, in the brachial and lumbar section of motor neurons (at protein level). Detected in ventro-lateral portion of embryonic spinal cord, in the brachial and lumbar section of embryonic motor neurons. Detected in embryonic adductor motor neurons and embryonic dorsal root ganglion. Detected in the caudal half of newly generated somites and in presomitic mesoderm.

It is found in the cell membrane. Functionally, cadherins are calcium-dependent cell adhesion proteins. They preferentially interact with themselves in a homophilic manner in connecting cells; cadherins may thus contribute to the sorting of heterogeneous cell types. This Gallus gallus (Chicken) protein is Cadherin-20 (CDH20).